The primary structure comprises 495 residues: WD repeat-containing protein 37 (495 aa).

Residues 1–34 are disordered; the sequence is MPTESGSWAAARQTKQKRKSHSLSIKRTNSSEQD. Positions 22–31 are enriched in polar residues; the sequence is SLSIKRTNSS. WD repeat units follow at residues 154-194 and 197-236; these read GHRD…CLIK and GHAG…PTPQ. The disordered stretch occupies residues 237–268; that stretch reads PMADTSQISGEEEVDFSDKDENDGDGDASSDC. Acidic residues predominate over residues 246 to 264; the sequence is GEEEVDFSDKDENDGDGDA. WD repeat units follow at residues 280–319, 322–361, 366–404, 407–446, and 453–494; these read SHQG…LVHS, GHDQ…IHSV, GHTD…SPIA, RTDS…LARL, and GHRR…LLQE.

It is found in the cytoplasm. It localises to the nucleus. This is WD repeat-containing protein 37 (wdr37) from Xenopus laevis (African clawed frog).